Consider the following 698-residue polypeptide: Elongation factor G (698 aa).

The region spanning 11–291 (THFRNIGIAA…AVVDYLPSPL (281 aa)) is the tr-type G domain. Residues 20–27 (AHIDAGKT), 90–94 (DTPGH), and 144–147 (NKMD) contribute to the GTP site.

Belongs to the TRAFAC class translation factor GTPase superfamily. Classic translation factor GTPase family. EF-G/EF-2 subfamily.

Its subcellular location is the cytoplasm. Catalyzes the GTP-dependent ribosomal translocation step during translation elongation. During this step, the ribosome changes from the pre-translocational (PRE) to the post-translocational (POST) state as the newly formed A-site-bound peptidyl-tRNA and P-site-bound deacylated tRNA move to the P and E sites, respectively. Catalyzes the coordinated movement of the two tRNA molecules, the mRNA and conformational changes in the ribosome. The sequence is that of Elongation factor G from Deinococcus radiodurans (strain ATCC 13939 / DSM 20539 / JCM 16871 / CCUG 27074 / LMG 4051 / NBRC 15346 / NCIMB 9279 / VKM B-1422 / R1).